The sequence spans 684 residues: MSAQDFLVELGTEELPPKALNTLADAFLAGIEKGLHSAGLKFEAKKVYAAPRRLAVLLTALETQQPDRSINLDGPPRQAAFDAEGNPTQAALGFAKKCGVELSEIDQSGPKLRFSQVITGKPTASLLPTIVEDSLNDLPIPKRMRWGARKEEFVRPTQWLVMLLGDQVIDCTLLAQKAGRDSRGHRFHHPQAVRITSPANYAADLRAAYVLADANERRELISKRTEELARLQEGTAIVPPSLLDEVTALVEWPVPLVCSFEERFLDVPQEALITTMQDNQKYFCLLDVDGKLLPRFITVANIESKDPQQIIAGNEKVVRPRLTDAEFFFKQDKKQKLEDFNLRLQNVVFQEKLGSVYDKAVRVSKLAAYIAQRIGGDAAWAARAGLLSKCDLATEMVGEFPEMQGVAGYYYALNDGEPDDVALALNEQYMPRGAGAELPTTLTGAAVAIADKLDTLVGIFGIGMLPTGSKDPYALRRAALGVLRILIDKKLDLDLTQAVVFAVGQFGAKVKQAGLAEQVLEFVFDRLRARYEDEGVDVSVYLSVRALQPGSALDFDQRVQAVQAFRKLPEADALASVNKRVSNLLSKAEGLGNADVDPGLFADAKEFSLNSAIAKAENAVKPLIAERNYAEALARLATLREPVDAFFEAVMINAEDAGVRKNRYAMLARLRGLFVNIADISTLS.

The protein belongs to the class-II aminoacyl-tRNA synthetase family. In terms of assembly, tetramer of two alpha and two beta subunits.

It is found in the cytoplasm. It catalyses the reaction tRNA(Gly) + glycine + ATP = glycyl-tRNA(Gly) + AMP + diphosphate. The protein is Glycine--tRNA ligase beta subunit of Pseudomonas fluorescens (strain SBW25).